The primary structure comprises 193 residues: Pyridoxal 5'-phosphate synthase subunit PdxT (193 aa).

50–52 (GES) contacts L-glutamine. Cys-82 serves as the catalytic Nucleophile. L-glutamine contacts are provided by residues Arg-109 and 136 to 137 (IR). Catalysis depends on charge relay system residues His-172 and Glu-174.

The protein belongs to the glutaminase PdxT/SNO family. As to quaternary structure, in the presence of PdxS, forms a dodecamer of heterodimers. Only shows activity in the heterodimer.

The catalysed reaction is aldehydo-D-ribose 5-phosphate + D-glyceraldehyde 3-phosphate + L-glutamine = pyridoxal 5'-phosphate + L-glutamate + phosphate + 3 H2O + H(+). It carries out the reaction L-glutamine + H2O = L-glutamate + NH4(+). Its pathway is cofactor biosynthesis; pyridoxal 5'-phosphate biosynthesis. Functionally, catalyzes the hydrolysis of glutamine to glutamate and ammonia as part of the biosynthesis of pyridoxal 5'-phosphate. The resulting ammonia molecule is channeled to the active site of PdxS. This chain is Pyridoxal 5'-phosphate synthase subunit PdxT, found in Streptococcus pneumoniae serotype 2 (strain D39 / NCTC 7466).